We begin with the raw amino-acid sequence, 368 residues long: Phospho-N-acetylmuramoyl-pentapeptide-transferase (368 aa).

The next 9 helical transmembrane spans lie at 23–43 (YITFRAGAAAVTALIIILVFG), 72–92 (IPTMGGLMIILAIEVSGLLWA), 94–114 (IAEPFVWMVLLAIIWMGAVGF), 139–159 (VALGLIIGGYTFFDPTLSVLL), 170–190 (ITVDYGIWYIPLAIFIVTAVS), 201–221 (GLAAGSTAISVFSLAGFAYLT), 238–258 (AGEVTILSMAIVAACIGFLWF), 265–286 (VFMGDTGSLALGSAVAVIALLI), and 345–365 (KIVIRFWIIEVLLVLTSLLTL).

Belongs to the glycosyltransferase 4 family. MraY subfamily. Requires Mg(2+) as cofactor.

The protein localises to the cell inner membrane. The enzyme catalyses UDP-N-acetyl-alpha-D-muramoyl-L-alanyl-gamma-D-glutamyl-meso-2,6-diaminopimeloyl-D-alanyl-D-alanine + di-trans,octa-cis-undecaprenyl phosphate = di-trans,octa-cis-undecaprenyl diphospho-N-acetyl-alpha-D-muramoyl-L-alanyl-D-glutamyl-meso-2,6-diaminopimeloyl-D-alanyl-D-alanine + UMP. The protein operates within cell wall biogenesis; peptidoglycan biosynthesis. Catalyzes the initial step of the lipid cycle reactions in the biosynthesis of the cell wall peptidoglycan: transfers peptidoglycan precursor phospho-MurNAc-pentapeptide from UDP-MurNAc-pentapeptide onto the lipid carrier undecaprenyl phosphate, yielding undecaprenyl-pyrophosphoryl-MurNAc-pentapeptide, known as lipid I. This is Phospho-N-acetylmuramoyl-pentapeptide-transferase from Chloroherpeton thalassium (strain ATCC 35110 / GB-78).